Reading from the N-terminus, the 377-residue chain is Lactosylceramide 1,3-N-acetyl-beta-D-glucosaminyltransferase A (377 aa).

At 1–12 (MLISARRLRRCQ) the chain is on the cytoplasmic side. Residues 13–30 (FLQLLASCFVLSLMALLV) form a helical; Signal-anchor for type II membrane protein membrane-spanning segment. Over 31 to 377 (QEDNSLISHV…DTYPCSAAWS (347 aa)) the chain is Lumenal. N-linked (GlcNAc...) asparagine glycosylation is found at Asn56, Asn167, and Asn275.

This sequence belongs to the glycosyltransferase 31 family.

The protein resides in the golgi apparatus membrane. It carries out the reaction a beta-D-Gal-(1-&gt;4)-beta-D-Glc-(1&lt;-&gt;1)-Cer(d18:1(4E)) + UDP-N-acetyl-alpha-D-glucosamine = a beta-D-GlcNAc-(1-&gt;3)-beta-D-Gal-(1-&gt;4)-beta-D-Glc-(1&lt;-&gt;1)-Cer(d18:1(4E)) + UDP + H(+). The catalysed reaction is a neolactoside nLc4Cer(d18:1(4E)) + UDP-N-acetyl-alpha-D-glucosamine = a neolactoside IV(3)-beta-GlcNAc-nLc4Cer(d18:1(4E)) + UDP + H(+). It functions in the pathway protein modification; protein glycosylation. Beta-1,3-N-acetylglucosaminyltransferase that plays a key role in the synthesis of lacto- or neolacto-series carbohydrate chains on glycolipids. This chain is Lactosylceramide 1,3-N-acetyl-beta-D-glucosaminyltransferase A (b3gnt5-a), found in Xenopus laevis (African clawed frog).